The chain runs to 149 residues: Nucleoside diphosphate kinase 1 (149 aa).

N-acetylmethionine is present on M1. ATP is bound by residues K9, F57, R85, T91, R102, and N112. H115 acts as the Pros-phosphohistidine intermediate in catalysis.

This sequence belongs to the NDK family. Interacts with CAT1, CAT2 and CAT3. Requires Mg(2+) as cofactor.

Its subcellular location is the peroxisome. The protein resides in the nucleus. The protein localises to the cytoplasm. The catalysed reaction is a 2'-deoxyribonucleoside 5'-diphosphate + ATP = a 2'-deoxyribonucleoside 5'-triphosphate + ADP. The enzyme catalyses a ribonucleoside 5'-diphosphate + ATP = a ribonucleoside 5'-triphosphate + ADP. Functionally, major role in the synthesis of nucleoside triphosphates other than ATP. The ATP gamma phosphate is transferred to the NDP beta phosphate via a ping-pong mechanism, using a phosphorylated active-site intermediate. Plays a role in response to reactive oxygen species (ROS) stress. This Arabidopsis thaliana (Mouse-ear cress) protein is Nucleoside diphosphate kinase 1 (NDK1).